Here is a 182-residue protein sequence, read N- to C-terminus: Ribosome-recycling factor (182 aa).

The protein belongs to the RRF family.

It localises to the cytoplasm. In terms of biological role, responsible for the release of ribosomes from messenger RNA at the termination of protein biosynthesis. May increase the efficiency of translation by recycling ribosomes from one round of translation to another. The chain is Ribosome-recycling factor from Prochlorococcus marinus (strain SARG / CCMP1375 / SS120).